Here is a 128-residue protein sequence, read N- to C-terminus: Iron-sulfur cluster insertion protein ErpA (128 aa).

Iron-sulfur cluster is bound by residues Cys-56, Cys-120, and Cys-122.

The protein belongs to the HesB/IscA family. In terms of assembly, homodimer. It depends on iron-sulfur cluster as a cofactor.

Its function is as follows. Required for insertion of 4Fe-4S clusters for at least IspG. This chain is Iron-sulfur cluster insertion protein ErpA, found in Xanthomonas oryzae pv. oryzae (strain MAFF 311018).